The sequence spans 240 residues: Dihydromonapterin reductase (240 aa).

Tyr-152 acts as the Proton acceptor in catalysis.

The protein belongs to the short-chain dehydrogenases/reductases (SDR) family. FolM subfamily.

The catalysed reaction is (6S)-5,6,7,8-tetrahydrofolate + NADP(+) = 7,8-dihydrofolate + NADPH + H(+). It carries out the reaction 7,8-dihydromonapterin + NADPH + H(+) = 5,6,7,8-tetrahydromonapterin + NADP(+). Functionally, catalyzes the reduction of dihydromonapterin to tetrahydromonapterin. Also has lower activity with dihydrofolate. The sequence is that of Dihydromonapterin reductase (folM) from Escherichia coli O1:K1 / APEC.